We begin with the raw amino-acid sequence, 166 residues long: Large ribosomal subunit protein uL10 (166 aa).

This sequence belongs to the universal ribosomal protein uL10 family. Part of the ribosomal stalk of the 50S ribosomal subunit. The N-terminus interacts with L11 and the large rRNA to form the base of the stalk. The C-terminus forms an elongated spine to which L12 dimers bind in a sequential fashion forming a multimeric L10(L12)X complex.

Its function is as follows. Forms part of the ribosomal stalk, playing a central role in the interaction of the ribosome with GTP-bound translation factors. This is Large ribosomal subunit protein uL10 from Bacillus cereus (strain 03BB102).